A 379-amino-acid polypeptide reads, in one-letter code: 23S rRNA (uracil(747)-C(5))-methyltransferase RlmC (379 aa).

C3, C11, C14, and C87 together coordinate [4Fe-4S] cluster. S-adenosyl-L-methionine is bound by residues Q212, F241, E262, and N309. C336 serves as the catalytic Nucleophile.

It belongs to the class I-like SAM-binding methyltransferase superfamily. RNA M5U methyltransferase family. RlmC subfamily.

The enzyme catalyses uridine(747) in 23S rRNA + S-adenosyl-L-methionine = 5-methyluridine(747) in 23S rRNA + S-adenosyl-L-homocysteine + H(+). Functionally, catalyzes the formation of 5-methyl-uridine at position 747 (m5U747) in 23S rRNA. In Shewanella loihica (strain ATCC BAA-1088 / PV-4), this protein is 23S rRNA (uracil(747)-C(5))-methyltransferase RlmC.